The chain runs to 722 residues: Polyribonucleotide nucleotidyltransferase (722 aa).

Asp487 and Asp493 together coordinate Mg(2+). The 60-residue stretch at 554–613 (PRIETFKIPTDKIREVIGTGGKVIREIVEKTGAKVNIEDDGTVKVASSDGESIKAAIKWI) folds into the KH domain. Positions 623 to 691 (GEIYEGTVVK…DRGKTRLSMK (69 aa)) constitute an S1 motif domain. The tract at residues 691-722 (KVVDQDTGEDLEAKQKAEAKAEDEAPAQAAGE) is disordered. Over residues 701-713 (LEAKQKAEAKAED) the composition is skewed to basic and acidic residues.

Belongs to the polyribonucleotide nucleotidyltransferase family. It depends on Mg(2+) as a cofactor.

The protein localises to the cytoplasm. It catalyses the reaction RNA(n+1) + phosphate = RNA(n) + a ribonucleoside 5'-diphosphate. Involved in mRNA degradation. Catalyzes the phosphorolysis of single-stranded polyribonucleotides processively in the 3'- to 5'-direction. The chain is Polyribonucleotide nucleotidyltransferase from Rhodopseudomonas palustris (strain BisB5).